The sequence spans 629 residues: tRNA uridine 5-carboxymethylaminomethyl modification enzyme MnmG (629 aa).

FAD-binding positions include 14–19, V126, and S181; that span reads GAGHAG. 273 to 287 contacts NAD(+); it reads GPRYCPSIEDKVVRF. FAD is bound at residue Q370.

It belongs to the MnmG family. Homodimer. Heterotetramer of two MnmE and two MnmG subunits. FAD is required as a cofactor.

The protein resides in the cytoplasm. NAD-binding protein involved in the addition of a carboxymethylaminomethyl (cmnm) group at the wobble position (U34) of certain tRNAs, forming tRNA-cmnm(5)s(2)U34. The chain is tRNA uridine 5-carboxymethylaminomethyl modification enzyme MnmG from Bacillus cereus (strain ZK / E33L).